We begin with the raw amino-acid sequence, 70 residues long: Toxin Isom2 (70 aa).

An LCN-type CS-alpha/beta domain is found at 2–65; sequence KNGYAVDSSG…ISDTRKKYCD (64 aa). 4 disulfide bridges follow: Cys-16–Cys-37, Cys-22–Cys-42, Cys-26–Cys-44, and Cys-38–Cys-64.

In terms of tissue distribution, expressed by the venom gland.

It localises to the secreted. Its function is as follows. Excitatory insect beta-toxins induce a spastic paralysis. They bind voltage-independently at site-4 of sodium channels (Nav) and shift the voltage of activation toward more negative potentials thereby affecting sodium channel activation and promoting spontaneous and repetitive firing. The sequence is that of Toxin Isom2 from Isometrus vittatus (Bark scorpion).